The sequence spans 271 residues: Cyanophycinase (271 aa).

Residues serine 132, histidine 174, and glutamate 201 each act as charge relay system in the active site.

This sequence belongs to the peptidase S51 family. Homodimer.

It catalyses the reaction [L-4-(L-arginin-2-N-yl)aspartate](n) + H2O = [L-4-(L-arginin-2-N-yl)aspartate](n-1) + L-4-(L-arginin-2-N-yl)aspartate. In terms of biological role, exopeptidase that catalyzes the hydrolytic cleavage of multi-L-arginyl-poly-L-aspartic acid (cyanophycin; a water-insoluble reserve polymer) into aspartate-arginine dipeptides. The chain is Cyanophycinase (cphB) from Synechocystis sp. (strain ATCC 27184 / PCC 6803 / Kazusa).